The chain runs to 68 residues: Small ribosomal subunit protein bS21 (68 aa).

This sequence belongs to the bacterial ribosomal protein bS21 family.

In Endomicrobium trichonymphae, this protein is Small ribosomal subunit protein bS21.